The following is a 218-amino-acid chain: Small ribosomal subunit protein uS3 (218 aa).

The region spanning I38–K106 is the KH type-2 domain.

This sequence belongs to the universal ribosomal protein uS3 family. Part of the 30S ribosomal subunit. Forms a tight complex with proteins S10 and S14.

Functionally, binds the lower part of the 30S subunit head. Binds mRNA in the 70S ribosome, positioning it for translation. This is Small ribosomal subunit protein uS3 from Bacillus subtilis (strain 168).